The sequence spans 214 residues: Outer-membrane lipoprotein LolB (214 aa).

The signal sequence occupies residues 1 to 25; that stretch reads MNNLKRLTKTIFSCFTLSALLLLAG. A lipid anchor (N-palmitoyl cysteine) is attached at Cys-26. Cys-26 carries S-diacylglycerol cysteine lipidation. Positions 143 to 160 are enriched in polar residues; the sequence is QVIESDSQGKPKQLTNTQ. A disordered region spans residues 143–163; the sequence is QVIESDSQGKPKQLTNTQTPP.

Belongs to the LolB family. In terms of assembly, monomer.

It localises to the cell outer membrane. Functionally, plays a critical role in the incorporation of lipoproteins in the outer membrane after they are released by the LolA protein. This is Outer-membrane lipoprotein LolB from Shewanella baltica (strain OS223).